The primary structure comprises 153 residues: Small ribosomal subunit protein uS9 (153 aa).

Positions methionine 1–aspartate 19 are enriched in low complexity. Disordered regions lie at residues methionine 1–valine 23 and leucine 121–arginine 153. The segment covering arginine 129–lysine 138 has biased composition (basic and acidic residues). Positions tyrosine 139–arginine 153 are enriched in basic residues.

Belongs to the universal ribosomal protein uS9 family.

The sequence is that of Small ribosomal subunit protein uS9 from Saccharopolyspora erythraea (strain ATCC 11635 / DSM 40517 / JCM 4748 / NBRC 13426 / NCIMB 8594 / NRRL 2338).